The sequence spans 480 residues: Histone deacetylase 1 (480 aa).

The tract at residues 9 to 321 (RKVCYYYDGD…WTYETAVALD (313 aa)) is histone deacetylase. 1D-myo-inositol 1,4,5,6-tetrakisphosphate-binding residues include glycine 27 and lysine 31. Residue histidine 141 is part of the active site. Positions 176, 178, and 264 each coordinate Zn(2+). Arginine 270 is a binding site for 1D-myo-inositol 1,4,5,6-tetrakisphosphate. The segment at 376–480 (APGVQMQPIP…KGVKEETKST (105 aa)) is disordered. Residues 388–400 (AVQEDSGDEEEED) show a composition bias toward acidic residues. The span at 401-416 (PEKRISIRNSDKRISC) shows a compositional bias: basic and acidic residues. Positions 417–427 (DEEFSDSEDEG) are enriched in acidic residues. Residues 455–480 (KDEKEEEKAKEEKAEPKGVKEETKST) are compositionally biased toward basic and acidic residues.

This sequence belongs to the histone deacetylase family. HD type 1 subfamily. Zn(2+) serves as cofactor.

The protein resides in the nucleus. The catalysed reaction is N(6)-acetyl-L-lysyl-[histone] + H2O = L-lysyl-[histone] + acetate. It carries out the reaction N(6)-acetyl-L-lysyl-[protein] + H2O = L-lysyl-[protein] + acetate. The enzyme catalyses N(6)-(2E)-butenoyl-L-lysyl-[protein] + H2O = (2E)-2-butenoate + L-lysyl-[protein]. It catalyses the reaction N(6)-[(S)-lactoyl]-L-lysyl-[protein] + H2O = (S)-lactate + L-lysyl-[protein]. With respect to regulation, inositol tetraphosphate (1D-myo-inositol 1,4,5,6-tetrakisphosphate) may act as an intermolecular glue between HDAC1 and N-Cor repressor complex components. Its function is as follows. Histone deacetylase that catalyzes the deacetylation of lysine residues on the N-terminal part of the core histones (H2A, H2B, H3 and H4). Histone deacetylation gives a tag for epigenetic repression and plays an important role in transcriptional regulation, cell cycle progression and developmental events. Histone deacetylases act via the formation of large multiprotein complexes. Also functions as a deacetylase for non-histone proteins. In addition to protein deacetylase activity, also has protein-lysine deacylase activity: acts as a protein decrotonylase and delactylase by mediating decrotonylation ((2E)-butenoyl) and delactylation (lactoyl) of histones, respectively. This chain is Histone deacetylase 1 (HDAC1), found in Gallus gallus (Chicken).